The following is an 87-amino-acid chain: UPF0512 protein B (87 aa).

Belongs to the UPF0512 family.

The protein is UPF0512 protein B of Dictyostelium discoideum (Social amoeba).